The sequence spans 182 residues: Probable RNA 2'-phosphotransferase (182 aa).

The protein belongs to the KptA/TPT1 family.

Its function is as follows. Removes the 2'-phosphate from RNA via an intermediate in which the phosphate is ADP-ribosylated by NAD followed by a presumed transesterification to release the RNA and generate ADP-ribose 1''-2''-cyclic phosphate (APPR&gt;P). May function as an ADP-ribosylase. The polypeptide is Probable RNA 2'-phosphotransferase (Trichormus variabilis (strain ATCC 29413 / PCC 7937) (Anabaena variabilis)).